The following is a 469-amino-acid chain: RNA-editing ligase 1, mitochondrial (469 aa).

A mitochondrion-targeting transit peptide spans 1–44 (MQLQRLGAPLLKRLVGGCIRQSTAPIMPCVVVSGSGGFLTPVRT). ATP is bound by residues 59–61 (IEI), 86–92 (EKVHGTN), N92, R111, E159, F209, and 307–309 (KLR). K87 (N6-AMP-lysine intermediate) is an active-site residue. A disordered region spans residues 450 to 469 (AAAQSEAIPPLSPAAPTKGE).

This sequence belongs to the RNA ligase 2 family. Component of the RNA editing complex (editosome), a 1600 kDa complex composed of at least 20 proteins. Interacts with terminal uridylyltransferase MEAT1.

The protein resides in the mitochondrion. It carries out the reaction ATP + (ribonucleotide)n-3'-hydroxyl + 5'-phospho-(ribonucleotide)m = (ribonucleotide)n+m + AMP + diphosphate.. Its function is as follows. Essential for RNA editing. RNA editing in kinetoplastid mitochondria inserts and deletes uridylates at multiple sites in pre-mRNAs as directed by guide RNAs. The chain is RNA-editing ligase 1, mitochondrial (REL1) from Trypanosoma brucei brucei (strain 927/4 GUTat10.1).